A 785-amino-acid polypeptide reads, in one-letter code: SUN domain-containing protein 1 (785 aa).

The tract at residues 1–138 (MDFSRLHMYS…TRRPPVLDES (138 aa)) is LMNA-binding. Residues 1 to 288 (MDFSRLHMYS…VFLLTRCLRN (288 aa)) lie on the Nuclear side of the membrane. 3 positions are modified to phosphoserine: S48, S100, and S138. K195 is covalently cross-linked (Glycyl lysine isopeptide (Lys-Gly) (interchain with G-Cter in SUMO2)). The SYNE2-binding stretch occupies residues 209–309 (SRVYSRDRNQ…FLLLAGLSLR (101 aa)). Residues 223 to 309 (LLQILRRIGA…FLLLAGLSLR (87 aa)) form an EMD-binding region. The helical transmembrane segment at 289–308 (ICKFLVLLIPLFLLLAGLSL) threads the bilayer. At 309–785 (RGQGNFFSFL…RFRVHGEPVK (477 aa)) the chain is on the perinuclear space side. Phosphoserine occurs at positions 333 and 344. Residues 428-495 (HQEHEVRMSH…KSELSSWRHV (68 aa)) adopt a coiled-coil conformation. The sufficient for interaction with SYNE1 and SYNE2 stretch occupies residues 574–785 (TSEAVVSAVS…RFRVHGEPVK (212 aa)). In terms of domain architecture, SUN spans 622–784 (GGSILSTRCS…YRFRVHGEPV (163 aa)).

Core component of the LINC complex which is composed of inner nuclear membrane SUN domain-containing proteins coupled to outer nuclear membrane KASH domain-containing nesprins. SUN and KASH domain-containing proteins seem to bind each other promiscuously; however, differentially expression of LINC complex constituents is giving rise to specific assemblies. At least SUN1/2-containing core LINC complexes are proposed to be hexameric composed of three protomers of each KASH and SUN domain-containing protein. Interacts with KASH5 (via the last 22 amino acids); this interaction mediates KASH5 telomere localization by forming a SUN1:KASH5 LINC complex. May interact with SYNE3. Interacts with SYNE2 and SYNE1; probably forming respective LINC complexes. Interacts with A-type lamin with a strong preference for unprocessed A-type lamin compared with the mature protein. Interaction with lamins B1 and C is hardly detectable. Interacts with NAT10. Interacts with EMD and TSNAX. Associates with the nuclear pore complex (NPC). Interacts with CCDC79/TERB1; promoting the accumulation of the LINC complex complexes at the telomere-nuclear envelope attachment sites. Interacts (via KASH domain) with TMEM258. Post-translationally, the disulfide bond with KASH domain-containing nesprins is required for stability of the respective LINC complexes under tensile forces.

Its subcellular location is the nucleus inner membrane. Functionally, as a component of the LINC (LInker of Nucleoskeleton and Cytoskeleton) complex involved in the connection between the nuclear lamina and the cytoskeleton. The nucleocytoplasmic interactions established by the LINC complex play an important role in the transmission of mechanical forces across the nuclear envelope and in nuclear movement and positioning. Required for interkinetic nuclear migration (INM) and essential for nucleokinesis and centrosome-nucleus coupling during radial neuronal migration in the cerebral cortex and during glial migration. Involved in telomere attachment to nuclear envelope in the prophase of meiosis implicating a SUN1/2:KASH5 LINC complex in which SUN1 and SUN2 seem to act at least partial redundantly. Required for gametogenesis and involved in selective gene expression of coding and non-coding RNAs needed for gametogenesis. Helps to define the distribution of nuclear pore complexes (NPCs). Required for efficient localization of SYNE4 in the nuclear envelope. May be involved in nuclear remodeling during sperm head formation in spermatogenesis. May play a role in DNA repair by suppressing non-homologous end joining repair to facilitate the repair of DNA cross-links. In Homo sapiens (Human), this protein is SUN domain-containing protein 1.